The sequence spans 132 residues: Small ribosomal subunit protein uS8 (132 aa).

It belongs to the universal ribosomal protein uS8 family. Part of the 30S ribosomal subunit. Contacts proteins S5 and S12.

Functionally, one of the primary rRNA binding proteins, it binds directly to 16S rRNA central domain where it helps coordinate assembly of the platform of the 30S subunit. The polypeptide is Small ribosomal subunit protein uS8 (Xylella fastidiosa (strain M23)).